Reading from the N-terminus, the 593-residue chain is MRTHYCSAVNELSLDKQITVCGWVHNRRDHGGVIFLDIRDRSGLLQVVYEPENKEIFAIAEKLRSEFVVRVTGIVRKRPEGMINDKMETGRVEVIGTQLEILNQSPTPPFLPDDHQIINEDLRYKYRYIDLRRAVMQKKLTLRHKLNSCIRNYLNEQNFLDIETPMLTKATPEGARDYLVPSRVHPGQFYALPQSPQLFKQLLMMSGFDKYYQIVRCFRDEDLRADRQPEFTQLDIEMAFINEEDILQLIEGLLKIVFKEILNITLPDKLPRMSYKEAMTRYGSDKPDLRNPLELIDIADLVKDCDFNVFSSAANDNSGRVVALKLPNGCDLSRKDLDNYGQFVTIYGAKGLAYIKVNDLSAGMAGLQSPILKFLSETAVQSILNRVEAQTGDVIFFGADKAHVVNESMGALRNKLGHDRNLINSGWQLLWVVDWPMFELDPQSNKLQPMHHPFTSPQELSAEALRSKPTQTLAKAYDIVINGYEIGGGSIRIHQPELQKTVFDLIGIGDQEAHEKFGFLLDALQYGAPPHGGIALGIDRLAMLLTDSTSIRDVIAFPKTQTASCPLTSAPSPAGNAQLTELGIRLAPTITTK.

L-aspartate is bound at residue Glu173. Positions 197–200 are aspartate; it reads QLFK. L-aspartate is bound at residue Arg219. ATP-binding positions include 219 to 221 and Gln228; that span reads RDE. An L-aspartate-binding site is contributed by His451. Residue Glu485 coordinates ATP. Arg492 serves as a coordination point for L-aspartate. 537–540 is an ATP binding site; that stretch reads GIDR.

The protein belongs to the class-II aminoacyl-tRNA synthetase family. Type 1 subfamily. Homodimer.

It is found in the cytoplasm. The enzyme catalyses tRNA(Asx) + L-aspartate + ATP = L-aspartyl-tRNA(Asx) + AMP + diphosphate. In terms of biological role, aspartyl-tRNA synthetase with relaxed tRNA specificity since it is able to aspartylate not only its cognate tRNA(Asp) but also tRNA(Asn). Reaction proceeds in two steps: L-aspartate is first activated by ATP to form Asp-AMP and then transferred to the acceptor end of tRNA(Asp/Asn). The chain is Aspartate--tRNA(Asp/Asn) ligase from Legionella pneumophila (strain Corby).